Here is a 384-residue protein sequence, read N- to C-terminus: 8-amino-7-oxononanoate synthase (384 aa).

R21 lines the substrate pocket. 108-109 lines the pyridoxal 5'-phosphate pocket; sequence GF. H133 lines the substrate pocket. Pyridoxal 5'-phosphate-binding residues include S179, H207, and T233. K236 carries the N6-(pyridoxal phosphate)lysine modification. T352 lines the substrate pocket.

This sequence belongs to the class-II pyridoxal-phosphate-dependent aminotransferase family. BioF subfamily. In terms of assembly, homodimer. Requires pyridoxal 5'-phosphate as cofactor.

The catalysed reaction is 6-carboxyhexanoyl-[ACP] + L-alanine + H(+) = (8S)-8-amino-7-oxononanoate + holo-[ACP] + CO2. Its pathway is cofactor biosynthesis; biotin biosynthesis. Functionally, catalyzes the decarboxylative condensation of pimeloyl-[acyl-carrier protein] and L-alanine to produce 8-amino-7-oxononanoate (AON), [acyl-carrier protein], and carbon dioxide. The protein is 8-amino-7-oxononanoate synthase of Escherichia coli (strain UTI89 / UPEC).